Consider the following 248-residue polypeptide: MRSLAILTTLLAGHAFAYPKPAPQSVNRRDWPSINEFLSELAKVMPIGDTITAACDLISDGEDAAASLFGISETENDPCGDVTVLFARGTCDPGNVGVLVGPWFFDSLQTALGSRTLGVKGVPYPASVQDFLSGSVQNGINMANQIKSVLQSCPNTKLVLGGYSQGSMVVHNAASNLDAATMSKISAVVLFGDPYYGKPVANFDAAKTLVVCHDGDNICQGGDIILLPHLTYAEDADTAAAFVVPLVS.

The first 17 residues, 1–17 (MRSLAILTTLLAGHAFA), serve as a signal peptide directing secretion. The propeptide occupies 18–28 (YPKPAPQSVNR). The segment at 31–70 (WPSINEFLSELAKVMPIGDTITAACDLISDGEDAAASLFG) is lid covering the active site of the uncomplexed enzyme. 2 disulfides stabilise this stretch: cysteine 55–cysteine 91 and cysteine 79–cysteine 153. The Nucleophile role is filled by serine 164. An intrachain disulfide couples cysteine 212 to cysteine 219. Aspartate 216 is a catalytic residue. Histidine 229 acts as the Proton donor/acceptor in catalysis.

It belongs to the cutinase family.

The protein localises to the secreted. The enzyme catalyses cutin + H2O = cutin monomers.. Weakly inhibited by n-undecyl phosphonate (C11Y4). Activity unaffected by paraoxon. Functionally, catalyzes the hydrolysis of complex carboxylic polyesters found in the cell wall of plants. Degrades cutin, a macromolecule that forms the structure of the plant cuticle. This Hypocrea jecorina (strain QM6a) (Trichoderma reesei) protein is Cutinase.